We begin with the raw amino-acid sequence, 161 residues long: Putative pre-16S rRNA nuclease (161 aa).

It belongs to the YqgF nuclease family.

The protein localises to the cytoplasm. Functionally, could be a nuclease involved in processing of the 5'-end of pre-16S rRNA. This is Putative pre-16S rRNA nuclease from Bradyrhizobium sp. (strain ORS 278).